The chain runs to 309 residues: Oxygen-dependent coproporphyrinogen-III oxidase (309 aa).

S100 provides a ligand contact to substrate. A divalent metal cation contacts are provided by H104 and H114. The active-site Proton donor is H114. A substrate-binding site is contributed by 116–118 (NVR). Residues H153 and H183 each contribute to the a divalent metal cation site. The interval 248–283 (YAEFNLVYDRGTLFGLQSGGRTESILMSLPPIVHWE) is important for dimerization. 266–268 (GGR) contributes to the substrate binding site.

This sequence belongs to the aerobic coproporphyrinogen-III oxidase family. Homodimer. It depends on a divalent metal cation as a cofactor.

It localises to the cytoplasm. The enzyme catalyses coproporphyrinogen III + O2 + 2 H(+) = protoporphyrinogen IX + 2 CO2 + 2 H2O. The protein operates within porphyrin-containing compound metabolism; protoporphyrin-IX biosynthesis; protoporphyrinogen-IX from coproporphyrinogen-III (O2 route): step 1/1. Functionally, involved in the heme biosynthesis. Catalyzes the aerobic oxidative decarboxylation of propionate groups of rings A and B of coproporphyrinogen-III to yield the vinyl groups in protoporphyrinogen-IX. The polypeptide is Oxygen-dependent coproporphyrinogen-III oxidase (Legionella pneumophila (strain Lens)).